Consider the following 185-residue polypeptide: Peptidyl-tRNA hydrolase (185 aa).

Residue tyrosine 14 coordinates tRNA. Histidine 19 (proton acceptor) is an active-site residue. Residues tyrosine 64, asparagine 66, and asparagine 112 each coordinate tRNA.

It belongs to the PTH family. In terms of assembly, monomer.

It is found in the cytoplasm. It catalyses the reaction an N-acyl-L-alpha-aminoacyl-tRNA + H2O = an N-acyl-L-amino acid + a tRNA + H(+). Functionally, hydrolyzes ribosome-free peptidyl-tRNAs (with 1 or more amino acids incorporated), which drop off the ribosome during protein synthesis, or as a result of ribosome stalling. Its function is as follows. Catalyzes the release of premature peptidyl moieties from peptidyl-tRNA molecules trapped in stalled 50S ribosomal subunits, and thus maintains levels of free tRNAs and 50S ribosomes. The protein is Peptidyl-tRNA hydrolase of Ligilactobacillus salivarius (strain UCC118) (Lactobacillus salivarius).